The primary structure comprises 99 residues: Ferredoxin (99 aa).

Residues 4–96 (YKIHLLCEEE…DCTISTHVEQ (93 aa)) enclose the 2Fe-2S ferredoxin-type domain. [2Fe-2S] cluster contacts are provided by Cys-42, Cys-47, Cys-50, and Cys-80.

This sequence belongs to the 2Fe2S plant-type ferredoxin family. As to quaternary structure, forms a complex with heterodimeric ferredoxin-thioredoxin reductase (FTR) and thioredoxin. [2Fe-2S] cluster serves as cofactor.

It localises to the plastid. Its subcellular location is the chloroplast. Ferredoxins are iron-sulfur proteins that transfer electrons in a wide variety of metabolic reactions. The polypeptide is Ferredoxin (petF) (Pyropia yezoensis (Susabi-nori)).